A 66-amino-acid chain; its full sequence is Brevinin-1DYb (66 aa).

The signal sequence occupies residues 1–22; that stretch reads MFTLKKSLLLLFFLGTISLSLC. Positions 23–44 are excised as a propeptide; the sequence is EEERNAEEERRDYPEERDVEVE. A disulfide bond links C60 and C66.

As to expression, expressed by the skin glands.

It is found in the secreted. Antimicrobial peptide. Has low activity against the Gram-positive bacterium S.aureus and the Gram-negative bacterium E.coli (MIC&lt;15 uM). Has a strong hemolytic activity. The chain is Brevinin-1DYb from Rana dybowskii (Dybovsky's frog).